The sequence spans 329 residues: Malate dehydrogenase (329 aa).

12–18 (GAAGQIG) is an NAD(+) binding site. Substrate-binding residues include arginine 95 and arginine 101. NAD(+)-binding positions include asparagine 108, glutamine 115, and 132-134 (VGN). Residues asparagine 134 and arginine 165 each coordinate substrate. Histidine 190 serves as the catalytic Proton acceptor.

This sequence belongs to the LDH/MDH superfamily. MDH type 2 family.

It carries out the reaction (S)-malate + NAD(+) = oxaloacetate + NADH + H(+). In terms of biological role, catalyzes the reversible oxidation of malate to oxaloacetate. The protein is Malate dehydrogenase of Ralstonia nicotianae (strain ATCC BAA-1114 / GMI1000) (Ralstonia solanacearum).